The chain runs to 227 residues: Phosphoribosylformylglycinamidine synthase subunit PurQ (227 aa).

In terms of domain architecture, Glutamine amidotransferase type-1 spans 2–226 (KFAVIQFPGS…VQAWKEEQVN (225 aa)). The active-site Nucleophile is cysteine 86. Catalysis depends on residues histidine 195 and glutamate 197.

Part of the FGAM synthase complex composed of 1 PurL, 1 PurQ and 2 PurS subunits.

It is found in the cytoplasm. The enzyme catalyses N(2)-formyl-N(1)-(5-phospho-beta-D-ribosyl)glycinamide + L-glutamine + ATP + H2O = 2-formamido-N(1)-(5-O-phospho-beta-D-ribosyl)acetamidine + L-glutamate + ADP + phosphate + H(+). The catalysed reaction is L-glutamine + H2O = L-glutamate + NH4(+). It participates in purine metabolism; IMP biosynthesis via de novo pathway; 5-amino-1-(5-phospho-D-ribosyl)imidazole from N(2)-formyl-N(1)-(5-phospho-D-ribosyl)glycinamide: step 1/2. Its function is as follows. Part of the phosphoribosylformylglycinamidine synthase complex involved in the purines biosynthetic pathway. Catalyzes the ATP-dependent conversion of formylglycinamide ribonucleotide (FGAR) and glutamine to yield formylglycinamidine ribonucleotide (FGAM) and glutamate. The FGAM synthase complex is composed of three subunits. PurQ produces an ammonia molecule by converting glutamine to glutamate. PurL transfers the ammonia molecule to FGAR to form FGAM in an ATP-dependent manner. PurS interacts with PurQ and PurL and is thought to assist in the transfer of the ammonia molecule from PurQ to PurL. The sequence is that of Phosphoribosylformylglycinamidine synthase subunit PurQ from Listeria welshimeri serovar 6b (strain ATCC 35897 / DSM 20650 / CCUG 15529 / CIP 8149 / NCTC 11857 / SLCC 5334 / V8).